The primary structure comprises 254 residues: Pyrroloquinoline-quinone synthase (254 aa).

It belongs to the PqqC family.

The catalysed reaction is 6-(2-amino-2-carboxyethyl)-7,8-dioxo-1,2,3,4,7,8-hexahydroquinoline-2,4-dicarboxylate + 3 O2 = pyrroloquinoline quinone + 2 H2O2 + 2 H2O + H(+). The protein operates within cofactor biosynthesis; pyrroloquinoline quinone biosynthesis. Functionally, ring cyclization and eight-electron oxidation of 3a-(2-amino-2-carboxyethyl)-4,5-dioxo-4,5,6,7,8,9-hexahydroquinoline-7,9-dicarboxylic-acid to PQQ. The polypeptide is Pyrroloquinoline-quinone synthase (Rhodopseudomonas palustris (strain TIE-1)).